Consider the following 924-residue polypeptide: TBC1 domain family member 2A (924 aa).

The tract at residues 1–38 (MEDTPERTPSSESIQPPGLAREPEVTSPGDSEGCARPL) is disordered. Residues 1–167 (MEDTPERTPS…TENGPTLHLK (167 aa)) form an interaction with CADH1 region. Residues 42-140 (PKKLCGYLSK…WLQQLQMKRW (99 aa)) form the PH domain. Residues 228–296 (KQAQATAHGP…KRQSNTFPFF (69 aa)) form a disordered region. Over residues 261 to 270 (IPEKEPEDPP) the composition is skewed to basic and acidic residues. The interaction with RAC1 stretch occupies residues 297-435 (SDGLARSRTA…KLTEDLAQPQ (139 aa)). Coiled coils occupy residues 303–332 (SRTA…ELVI), 361–418 (LELV…AKQQ), and 444–477 (FLSQ…QVTK). In terms of domain architecture, Rab-GAP TBC spans 621-813 (GVPREHRPRV…RVWDAFLYEG (193 aa)). Residues 871 to 906 (MKQLRQLRAAHRERLEAELRELELLKAEYLERRASR) adopt a coiled-coil conformation. Phosphoserine is present on S916.

Interacts with activated RAC1 and CDH1.

The protein localises to the cytoplasm. It is found in the cytoplasmic vesicle. The protein resides in the cell junction. In terms of biological role, acts as a GTPase-activating protein for RAB7A. Signal effector acting as a linker between RAC1 and RAB7A, leading to RAB7A inactivation and subsequent inhibition of cadherin degradation and reduced cell-cell adhesion. In Rattus norvegicus (Rat), this protein is TBC1 domain family member 2A (Tbc1d2).